A 197-amino-acid polypeptide reads, in one-letter code: Probable molybdenum cofactor guanylyltransferase (197 aa).

Residues 12-14, lysine 24, aspartate 71, and aspartate 103 contribute to the GTP site; that span reads LAG. Aspartate 103 contributes to the Mg(2+) binding site.

Belongs to the MobA family. Mg(2+) serves as cofactor.

The protein resides in the cytoplasm. The enzyme catalyses Mo-molybdopterin + GTP + H(+) = Mo-molybdopterin guanine dinucleotide + diphosphate. Its function is as follows. Transfers a GMP moiety from GTP to Mo-molybdopterin (Mo-MPT) cofactor (Moco or molybdenum cofactor) to form Mo-molybdopterin guanine dinucleotide (Mo-MGD) cofactor. In Mycobacterium avium (strain 104), this protein is Probable molybdenum cofactor guanylyltransferase.